We begin with the raw amino-acid sequence, 622 residues long: Histone-arginine methyltransferase CARMER (622 aa).

The SAM-dependent MTase PRMT-type domain maps to 118–425 (ASQYFQFYGY…QRQSYDVEID (308 aa)). 6 residues coordinate S-adenosyl-L-methionine: glutamine 131, arginine 140, glycine 164, glutamate 186, glutamate 215, and threonine 243. Arginine 478 bears the Asymmetric dimethylarginine; by autocatalysis mark. Disordered regions lie at residues 513 to 556 (ANGG…QQQQ) and 602 to 622 (QPIL…NQFY). Residues 536–556 (QQQQQQQQQQQQAAVGPQQQQ) are compositionally biased toward low complexity.

Belongs to the class I-like SAM-binding methyltransferase superfamily. Protein arginine N-methyltransferase family. Homodimer. In terms of processing, the dimethylated protein is the major form.

The protein localises to the cytoplasm. Its subcellular location is the nucleus. It catalyses the reaction L-arginyl-[protein] + 2 S-adenosyl-L-methionine = N(omega),N(omega)-dimethyl-L-arginyl-[protein] + 2 S-adenosyl-L-homocysteine + 2 H(+). Its function is as follows. Methylates (mono- and asymmetric dimethylation) the guanidino nitrogens of arginyl residues in proteins. May methylate histone H3 at 'Arg-17' and activate transcription via chromatin remodeling. This chain is Histone-arginine methyltransferase CARMER, found in Anopheles gambiae (African malaria mosquito).